We begin with the raw amino-acid sequence, 189 residues long: uncharacterized protein (189 aa).

3 helical membrane-spanning segments follow: residues 2 to 22 (LVVV…HHLL), 93 to 113 (ILFY…YFIL), and 116 to 136 (FYST…LHTL).

It localises to the membrane. This is an uncharacterized protein from Schizosaccharomyces pombe (strain 972 / ATCC 24843) (Fission yeast).